A 246-amino-acid polypeptide reads, in one-letter code: Osmotin-like protein TPM-1 (246 aa).

The N-terminal stretch at methionine 1–alanine 21 is a signal peptide. 8 disulfide bridges follow: cysteine 30–cysteine 225, cysteine 72–cysteine 82, cysteine 87–cysteine 93, cysteine 141–cysteine 213, cysteine 146–cysteine 196, cysteine 154–cysteine 164, cysteine 168–cysteine 177, and cysteine 178–cysteine 183.

This sequence belongs to the thaumatin family.

Its subcellular location is the vacuole. The catalysed reaction is Endohydrolysis of (1-&gt;3)- or (1-&gt;4)-linkages in beta-D-glucans when the glucose residue whose reducing group is involved in the linkage to be hydrolyzed is itself substituted at C-3.. Antifungal protein that inhibits the growth of several phytopathogenic fungi (e.g. Trichothecium roseum, Fusarium oxysporum, Phytophthora citrophthora and Colletotrichum coccodes). May bind to beta-glucans and have beta-1,3-D-glucanase activity. This is Osmotin-like protein TPM-1 from Solanum lycopersicum (Tomato).